The primary structure comprises 446 residues: Exodeoxyribonuclease 7 large subunit (446 aa).

This sequence belongs to the XseA family. In terms of assembly, heterooligomer composed of large and small subunits.

The protein localises to the cytoplasm. It carries out the reaction Exonucleolytic cleavage in either 5'- to 3'- or 3'- to 5'-direction to yield nucleoside 5'-phosphates.. Bidirectionally degrades single-stranded DNA into large acid-insoluble oligonucleotides, which are then degraded further into small acid-soluble oligonucleotides. The protein is Exodeoxyribonuclease 7 large subunit of Streptococcus equi subsp. zooepidemicus (strain MGCS10565).